The primary structure comprises 566 residues: Putative UDP-glucuronate:xylan alpha-glucuronosyltransferase 5 (566 aa).

Residues L17–L37 traverse the membrane as a helical; Signal-anchor for type II membrane protein segment. Residues D372 and D374 each coordinate Mn(2+). Substrate contacts are provided by residues D372–D374, N401–G403, N428–Q432, and H475–K480. H475 provides a ligand contact to Mn(2+).

The protein belongs to the glycosyltransferase 8 family. Glycogenin subfamily. Mn(2+) is required as a cofactor.

The protein resides in the golgi apparatus membrane. Its function is as follows. May be involved in the substitutions of the xylan backbone in stem glucuronoxylan. The polypeptide is Putative UDP-glucuronate:xylan alpha-glucuronosyltransferase 5 (GUX5) (Arabidopsis thaliana (Mouse-ear cress)).